The following is a 237-amino-acid chain: Uridylate kinase (237 aa).

Residue 12–15 (KLSG) coordinates ATP. An involved in allosteric activation by GTP region spans residues 20 to 25 (GDEGFG). Glycine 54 serves as a coordination point for UMP. ATP is bound by residues glycine 55 and arginine 59. Residues aspartate 74 and 135-142 (TGSPFFTT) contribute to the UMP site. 3 residues coordinate ATP: threonine 162, tyrosine 168, and aspartate 171.

The protein belongs to the UMP kinase family. In terms of assembly, homohexamer.

Its subcellular location is the cytoplasm. The catalysed reaction is UMP + ATP = UDP + ADP. Its pathway is pyrimidine metabolism; CTP biosynthesis via de novo pathway; UDP from UMP (UMPK route): step 1/1. Its activity is regulated as follows. Allosterically activated by GTP. Inhibited by UTP. Catalyzes the reversible phosphorylation of UMP to UDP. The polypeptide is Uridylate kinase (Haemophilus ducreyi (strain 35000HP / ATCC 700724)).